The following is a 261-amino-acid chain: 1-(5-phosphoribosyl)-5-[(5-phosphoribosylamino)methylideneamino] imidazole-4-carboxamide isomerase (261 aa).

It belongs to the HisA/HisF family.

The protein localises to the cytoplasm. The catalysed reaction is 1-(5-phospho-beta-D-ribosyl)-5-[(5-phospho-beta-D-ribosylamino)methylideneamino]imidazole-4-carboxamide = 5-[(5-phospho-1-deoxy-D-ribulos-1-ylimino)methylamino]-1-(5-phospho-beta-D-ribosyl)imidazole-4-carboxamide. It functions in the pathway amino-acid biosynthesis; L-histidine biosynthesis; L-histidine from 5-phospho-alpha-D-ribose 1-diphosphate: step 4/9. Functionally, catalyzes the isomerization of the aminoaldose moiety of ProFAR to the aminoketose of PRFAR. The chain is 1-(5-phosphoribosyl)-5-[(5-phosphoribosylamino)methylideneamino] imidazole-4-carboxamide isomerase from Saccharomyces cerevisiae (strain ATCC 204508 / S288c) (Baker's yeast).